Here is a 496-residue protein sequence, read N- to C-terminus: Zinc finger and SCAN domain-containing protein 5C (496 aa).

Over residues 1 to 19 (MAANCTSSWSLGESCNSPG) the composition is skewed to polar residues. The tract at residues 1-38 (MAANCTSSWSLGESCNSPGSEPPQSMPSPATQLGNHDS) is disordered. Positions 44-126 (HVNFRMFSCP…DLLRNNRRPK (83 aa)) constitute an SCAN box domain. Disordered stretches follow at residues 149 to 188 (EAPASVRDDPRHVSSQRTSSVNQMCPEEGQASQELQTLPR) and 203 to 347 (PETT…HPSG). A compositionally biased stretch (polar residues) spans 161 to 171 (VSSQRTSSVNQ). A compositionally biased stretch (basic and acidic residues) spans 210-223 (GDPKALRPKPTLEK). Residues 234–247 (GLTSPEPQLPNSPT) are compositionally biased toward polar residues. The span at 253–263 (KEGKEPQKRAS) shows a compositional bias: basic and acidic residues. C2H2-type zinc fingers lie at residues 356–378 (FACEVCGKRFKYRGKLAVHTRSH), 384–406 (FQCNLCGKRFMQRIGLQFHQRTH), 412–434 (YTCDICQKQFTQKSYLKCHKRSH), 440–462 (FECKDCKKVFTYKANLKEHQRIH), and 468–490 (HKCSKCPRAFGRPATLRRHQKTH).

It is found in the nucleus. Functionally, may be involved in transcriptional regulation. This chain is Zinc finger and SCAN domain-containing protein 5C, found in Homo sapiens (Human).